The sequence spans 468 residues: uncharacterized protein (468 aa).

Residues 1-22 (MVKRSSHRQVVLDEDDEENYNN) form a disordered region. An RING-type zinc finger spans residues 85 to 123 (CPICTEALQRPFTTHCGHTYCYECLLNWLKESKSCPTCR). Over residues 386–402 (DSLNSSSNNSPSHNNIH) the composition is skewed to low complexity. A disordered region spans residues 386–468 (DSLNSSSNNS…TIQLDSDEES (83 aa)). Residues 417–434 (IVTNGTGLRSSQSSSQNR) show a composition bias toward polar residues.

It is found in the nucleus. This is an uncharacterized protein from Schizosaccharomyces pombe (strain 972 / ATCC 24843) (Fission yeast).